Reading from the N-terminus, the 80-residue chain is Protein FAM229B (80 aa).

The tract at residues 1-45 is disordered; sequence MPFRFGTQPRRFPVEGGDSSIELESGLSSSASCNGKETSPNRQLR. The segment covering 15–32 has biased composition (low complexity); it reads EGGDSSIELESGLSSSAS. Residues 33–42 are compositionally biased toward polar residues; that stretch reads CNGKETSPNR.

This sequence belongs to the FAM229 family.

The polypeptide is Protein FAM229B (Fam229b) (Rattus norvegicus (Rat)).